The following is a 359-amino-acid chain: Peptide chain release factor 1 (359 aa).

At glutamine 235 the chain carries N5-methylglutamine.

Belongs to the prokaryotic/mitochondrial release factor family. In terms of processing, methylated by PrmC. Methylation increases the termination efficiency of RF1.

Its subcellular location is the cytoplasm. Peptide chain release factor 1 directs the termination of translation in response to the peptide chain termination codons UAG and UAA. This is Peptide chain release factor 1 from Verminephrobacter eiseniae (strain EF01-2).